Consider the following 368-residue polypeptide: 3-dehydroquinate synthase (368 aa).

NAD(+) contacts are provided by residues 112 to 116 (GVVGD), 136 to 137 (TT), Lys149, Lys158, and 176 to 179 (FLDT). Zn(2+) contacts are provided by Glu191, His257, and His274.

This sequence belongs to the sugar phosphate cyclases superfamily. Dehydroquinate synthase family. Requires Co(2+) as cofactor. The cofactor is Zn(2+). NAD(+) is required as a cofactor.

The protein resides in the cytoplasm. It catalyses the reaction 7-phospho-2-dehydro-3-deoxy-D-arabino-heptonate = 3-dehydroquinate + phosphate. It functions in the pathway metabolic intermediate biosynthesis; chorismate biosynthesis; chorismate from D-erythrose 4-phosphate and phosphoenolpyruvate: step 2/7. In terms of biological role, catalyzes the conversion of 3-deoxy-D-arabino-heptulosonate 7-phosphate (DAHP) to dehydroquinate (DHQ). This Natranaerobius thermophilus (strain ATCC BAA-1301 / DSM 18059 / JW/NM-WN-LF) protein is 3-dehydroquinate synthase.